The primary structure comprises 439 residues: Enolase 2 (439 aa).

Positions 160 and 169 each coordinate substrate. Catalysis depends on Glu-212, which acts as the Proton donor. Asp-247, Glu-296, and Asp-323 together coordinate Mg(2+). 2 residues coordinate substrate: Glu-296 and Asp-323. Lys-348 functions as the Proton acceptor in the catalytic mechanism. Residues 375 to 378 and Lys-399 contribute to the substrate site; that span reads SHRS.

The protein belongs to the enolase family. In terms of assembly, homodimer. It depends on Mg(2+) as a cofactor.

It is found in the cytoplasm. The catalysed reaction is (2R)-2-phosphoglycerate = phosphoenolpyruvate + H2O. It functions in the pathway carbohydrate degradation; glycolysis; pyruvate from D-glyceraldehyde 3-phosphate: step 4/5. This Debaryomyces hansenii (strain ATCC 36239 / CBS 767 / BCRC 21394 / JCM 1990 / NBRC 0083 / IGC 2968) (Yeast) protein is Enolase 2 (ENO2).